The sequence spans 474 residues: Chromosomal replication initiator protein DnaA (474 aa).

Residues 1-91 (MSEELWQRCL…STRASTPAAS (91 aa)) are domain I, interacts with DnaA modulators. The segment at 89–138 (AASYFNGSSSSSSNGPITTPAAAPAPRQPESDSRPQPTSLGGARKHRSNL) is disordered. Residues 91-136 (SYFNGSSSSSSNGPITTPAAAPAPRQPESDSRPQPTSLGGARKHRS) are domain II. The segment covering 96 to 113 (SSSSSSNGPITTPAAAPA) has biased composition (low complexity). Positions 137–354 (NLNTGFTFST…GALRRVIAHV (218 aa)) are domain III, AAA+ region. ATP contacts are provided by glycine 182, glycine 184, lysine 185, and threonine 186. Residues 355-474 (RFTGAQIDIG…YLNLLRTLTS (120 aa)) form a domain IV, binds dsDNA region.

Belongs to the DnaA family. Oligomerizes as a right-handed, spiral filament on DNA at oriC.

The protein resides in the cytoplasm. In terms of biological role, plays an essential role in the initiation and regulation of chromosomal replication. ATP-DnaA binds to the origin of replication (oriC) to initiate formation of the DNA replication initiation complex once per cell cycle. Binds the DnaA box (a 9 base pair repeat at the origin) and separates the double-stranded (ds)DNA. Forms a right-handed helical filament on oriC DNA; dsDNA binds to the exterior of the filament while single-stranded (ss)DNA is stabiized in the filament's interior. The ATP-DnaA-oriC complex binds and stabilizes one strand of the AT-rich DNA unwinding element (DUE), permitting loading of DNA polymerase. After initiation quickly degrades to an ADP-DnaA complex that is not apt for DNA replication. Binds acidic phospholipids. This is Chromosomal replication initiator protein DnaA from Alcanivorax borkumensis (strain ATCC 700651 / DSM 11573 / NCIMB 13689 / SK2).